The following is a 462-amino-acid chain: ATP synthase subunit beta (462 aa).

150-157 (GGAGVGKT) provides a ligand contact to ATP.

The protein belongs to the ATPase alpha/beta chains family. In terms of assembly, F-type ATPases have 2 components, CF(1) - the catalytic core - and CF(0) - the membrane proton channel. CF(1) has five subunits: alpha(3), beta(3), gamma(1), delta(1), epsilon(1). CF(0) has three main subunits: a(1), b(2) and c(9-12). The alpha and beta chains form an alternating ring which encloses part of the gamma chain. CF(1) is attached to CF(0) by a central stalk formed by the gamma and epsilon chains, while a peripheral stalk is formed by the delta and b chains. In this bacterium the a and b subunits are transcribed but do not seem to be translated, thus the ATP synthase consists of the alpha, beta, gamma, delta, epsilon and c subunits.

It is found in the cell membrane. It catalyses the reaction ATP + H2O + 4 H(+)(in) = ADP + phosphate + 5 H(+)(out). Functionally, produces ATP from ADP in the presence of a proton gradient across the membrane. The catalytic sites are hosted primarily by the beta subunits. This Moorella thermoacetica (strain ATCC 39073 / JCM 9320) protein is ATP synthase subunit beta.